The primary structure comprises 235 residues: Cytochrome c-554 (235 aa).

The N-terminal stretch at 1–24 (MKIMIACGLVAAALFTLTSGQSLA) is a signal peptide. 15 residues coordinate heme: Cys35, Cys38, His39, His51, Cys84, Cys87, His88, Cys112, Cys115, His116, His126, Cys158, Cys161, His162, and His203. The disordered stretch occupies residues 121–144 (NFRGDHRKSGQAFEKSGKKTPRKD).

Post-translationally, binds 4 heme groups per subunit.

The protein resides in the periplasm. In terms of biological role, involved in ammonia oxidation; accepts electrons directly from hydroxylamine oxidoreductase (HAO). The protein is Cytochrome c-554 (cycA1) of Nitrosomonas europaea (strain ATCC 19718 / CIP 103999 / KCTC 2705 / NBRC 14298).